A 317-amino-acid polypeptide reads, in one-letter code: Transaldolase (317 aa).

Lys-132 acts as the Schiff-base intermediate with substrate in catalysis.

This sequence belongs to the transaldolase family. Type 1 subfamily. As to quaternary structure, homodimer.

Its subcellular location is the cytoplasm. It carries out the reaction D-sedoheptulose 7-phosphate + D-glyceraldehyde 3-phosphate = D-erythrose 4-phosphate + beta-D-fructose 6-phosphate. It functions in the pathway carbohydrate degradation; pentose phosphate pathway; D-glyceraldehyde 3-phosphate and beta-D-fructose 6-phosphate from D-ribose 5-phosphate and D-xylulose 5-phosphate (non-oxidative stage): step 2/3. Its function is as follows. Transaldolase is important for the balance of metabolites in the pentose-phosphate pathway. The polypeptide is Transaldolase (Shewanella frigidimarina (strain NCIMB 400)).